The following is a 489-amino-acid chain: GDP-fucose protein O-fucosyltransferase 4 (489 aa).

Topologically, residues 1–7 (MAARCTE) are cytoplasmic. Residues 8–24 (AVLAALGVLSVCSASSS) form a helical; Signal-anchor for type II membrane protein membrane-spanning segment. Topologically, residues 25-489 (GSEASGEAER…EIFMKRNKNL (465 aa)) are lumenal. Asparagine 162 carries N-linked (GlcNAc...) asparagine glycosylation. Cysteines 385 and 388 form a disulfide.

Belongs to the glycosyltransferase 10 family. Widely expressed. Expressed at slightly higher level in heart, kidney and lung.

It is found in the endoplasmic reticulum membrane. The catalysed reaction is L-threonyl-[protein] + GDP-beta-L-fucose = 3-O-(alpha-L-fucosyl)-L-threonyl-[protein] + GDP + H(+). It carries out the reaction L-seryl-[protein] + GDP-beta-L-fucose = 3-O-(alpha-L-fucosyl)-L-seryl-[protein] + GDP + H(+). It participates in protein modification; protein glycosylation. Its function is as follows. Protein O-fucosyltransferase that specifically catalyzes O-fucosylation of serine or threonine residues in EMI domains of target proteins, such as MMRN1, MMRN2 and EMID1. Attaches fucose through an O-glycosidic linkage. O-fucosylation of EMI domain-containing proteins may be required for facilitating protein folding and secretion. Also shows minor alpha-(1,3)-fucosyltransferase activity toward activity toward biantennary N-glycan acceptors. However, this was tested with a library of synthetic substrates and this activity is unsure in vivo. The polypeptide is GDP-fucose protein O-fucosyltransferase 4 (Fut11) (Mus musculus (Mouse)).